Here is a 79-residue protein sequence, read N- to C-terminus: Acyl carrier protein (79 aa).

The Carrier domain maps to 4–79 (AEIKDKVYDI…QAIDYIVNKK (76 aa)). Ser-39 carries the post-translational modification O-(pantetheine 4'-phosphoryl)serine.

The protein belongs to the acyl carrier protein (ACP) family. In terms of processing, 4'-phosphopantetheine is transferred from CoA to a specific serine of apo-ACP by AcpS. This modification is essential for activity because fatty acids are bound in thioester linkage to the sulfhydryl of the prosthetic group.

Its subcellular location is the cytoplasm. The protein operates within lipid metabolism; fatty acid biosynthesis. Functionally, carrier of the growing fatty acid chain in fatty acid biosynthesis. The sequence is that of Acyl carrier protein from Pelodictyon phaeoclathratiforme (strain DSM 5477 / BU-1).